Here is a 278-residue protein sequence, read N- to C-terminus: Tyrosine-protein phosphatase pmp1 (278 aa).

Residues 60 to 214 (GPVCIYPPNI…LSEYQQIIRK (155 aa)) enclose the Tyrosine-protein phosphatase domain. Catalysis depends on Cys-158, which acts as the Phosphocysteine intermediate. Positions 217-278 (SQGPYQSSSL…SSGSISNDAS (62 aa)) are disordered. A compositionally biased stretch (polar residues) spans 252 to 278 (SPSTSESSMFTNLRRTRSSGSISNDAS).

The protein belongs to the protein-tyrosine phosphatase family. Non-receptor class dual specificity subfamily.

The catalysed reaction is O-phospho-L-tyrosyl-[protein] + H2O = L-tyrosyl-[protein] + phosphate. In terms of biological role, dual specificity phosphatase that dephosphorylates MAP kinase pmk1 on a Tyr. Has a role in chloride ion homeostasis by inactivating this pmk1 MAP kinase pathway. This chain is Tyrosine-protein phosphatase pmp1 (pmp1), found in Schizosaccharomyces pombe (strain 972 / ATCC 24843) (Fission yeast).